Consider the following 538-residue polypeptide: Bifunctional purine biosynthesis protein PurH (538 aa).

In terms of domain architecture, MGS-like spans 8–158 (IPAPDKVQVK…KNHAYVTTLT (151 aa)).

Belongs to the PurH family.

The enzyme catalyses (6R)-10-formyltetrahydrofolate + 5-amino-1-(5-phospho-beta-D-ribosyl)imidazole-4-carboxamide = 5-formamido-1-(5-phospho-D-ribosyl)imidazole-4-carboxamide + (6S)-5,6,7,8-tetrahydrofolate. It catalyses the reaction IMP + H2O = 5-formamido-1-(5-phospho-D-ribosyl)imidazole-4-carboxamide. The protein operates within purine metabolism; IMP biosynthesis via de novo pathway; 5-formamido-1-(5-phospho-D-ribosyl)imidazole-4-carboxamide from 5-amino-1-(5-phospho-D-ribosyl)imidazole-4-carboxamide (10-formyl THF route): step 1/1. It functions in the pathway purine metabolism; IMP biosynthesis via de novo pathway; IMP from 5-formamido-1-(5-phospho-D-ribosyl)imidazole-4-carboxamide: step 1/1. In Rhizobium rhizogenes (strain K84 / ATCC BAA-868) (Agrobacterium radiobacter), this protein is Bifunctional purine biosynthesis protein PurH.